The following is a 119-amino-acid chain: Ribonuclease P protein component (119 aa).

The protein belongs to the RnpA family. As to quaternary structure, consists of a catalytic RNA component (M1 or rnpB) and a protein subunit.

It carries out the reaction Endonucleolytic cleavage of RNA, removing 5'-extranucleotides from tRNA precursor.. RNaseP catalyzes the removal of the 5'-leader sequence from pre-tRNA to produce the mature 5'-terminus. It can also cleave other RNA substrates such as 4.5S RNA. The protein component plays an auxiliary but essential role in vivo by binding to the 5'-leader sequence and broadening the substrate specificity of the ribozyme. This is Ribonuclease P protein component from Aeromonas hydrophila subsp. hydrophila (strain ATCC 7966 / DSM 30187 / BCRC 13018 / CCUG 14551 / JCM 1027 / KCTC 2358 / NCIMB 9240 / NCTC 8049).